The primary structure comprises 466 residues: MLRNIPRSLRKDGGKRIPGLISRVANQFSTTSSLLNKKSIPDAPEDSHTGQYINTITKPFTVTTYARPNVVMTHGKGSYLYDLENRQYLDFSAGIAVTCLGHSHSKITEIISDQAATLMHCSNLYHNLYAGELANKLVTNTINSGGMKEAQRVFLCNSGTEANEAALKFARKYGKSFSDDKYEMITFKNSFHGRTMGALSVTPNEKYQKPFAPLVPGVKIAEPNDISSVEKLISKEKTCAVIIEPIQGEGGVNAIDAEFLVSLKKLCVDNEVVLIYDEIQCGLGRSGKLWAHCNLPEEAHPDILTMAKALGNGFPIGAVMVSDKIEKVLKVGDHGTTYGGNPLGSKIGSYVVDQVSDKEFLLEVEEKSEKFTKGLSKIANKHPDHIGEVKGKGLLLGLQLKGNLDVGDVVAKCRENGLLVISAGMNVLRIVPALNIPNEAIEEGLDVLDKCIDELSKDPKSSFSQS.

Lys-308 carries the post-translational modification N6-(pyridoxal phosphate)lysine.

Belongs to the class-III pyridoxal-phosphate-dependent aminotransferase family. It depends on pyridoxal 5'-phosphate as a cofactor.

The protein resides in the mitochondrion matrix. The catalysed reaction is N(2)-acetyl-L-ornithine + 2-oxoglutarate = N-acetyl-L-glutamate 5-semialdehyde + L-glutamate. The protein operates within amino-acid biosynthesis; L-arginine biosynthesis; N(2)-acetyl-L-ornithine from L-glutamate: step 4/4. The chain is Acetylornithine aminotransferase, mitochondrial (ARG8) from Debaryomyces hansenii (strain ATCC 36239 / CBS 767 / BCRC 21394 / JCM 1990 / NBRC 0083 / IGC 2968) (Yeast).